A 359-amino-acid chain; its full sequence is 4-hydroxy-tetrahydrodipicolinate synthase, chloroplastic (359 aa).

A chloroplast-targeting transit peptide spans 1-33; that stretch reads MSSSIIGRCHFVADSIEAAGTKRRTTRWRSPRA. Thr-102 contributes to the pyruvate binding site. The active-site Proton donor/acceptor is Tyr-188. The active-site Schiff-base intermediate with substrate is the Lys-216. Ile-255 is a binding site for pyruvate.

It belongs to the DapA family.

It localises to the plastid. It is found in the chloroplast. It carries out the reaction L-aspartate 4-semialdehyde + pyruvate = (2S,4S)-4-hydroxy-2,3,4,5-tetrahydrodipicolinate + H2O + H(+). It participates in amino-acid biosynthesis; L-lysine biosynthesis via DAP pathway; (S)-tetrahydrodipicolinate from L-aspartate: step 3/4. In terms of biological role, catalyzes the condensation of (S)-aspartate-beta-semialdehyde [(S)-ASA] and pyruvate to 4-hydroxy-tetrahydrodipicolinate (HTPA). This is 4-hydroxy-tetrahydrodipicolinate synthase, chloroplastic (DHPS1) from Nicotiana tabacum (Common tobacco).